A 251-amino-acid chain; its full sequence is 3-deoxy-manno-octulosonate cytidylyltransferase (251 aa).

The protein belongs to the KdsB family.

It is found in the cytoplasm. The catalysed reaction is 3-deoxy-alpha-D-manno-oct-2-ulosonate + CTP = CMP-3-deoxy-beta-D-manno-octulosonate + diphosphate. It functions in the pathway nucleotide-sugar biosynthesis; CMP-3-deoxy-D-manno-octulosonate biosynthesis; CMP-3-deoxy-D-manno-octulosonate from 3-deoxy-D-manno-octulosonate and CTP: step 1/1. It participates in bacterial outer membrane biogenesis; lipopolysaccharide biosynthesis. Its function is as follows. Activates KDO (a required 8-carbon sugar) for incorporation into bacterial lipopolysaccharide in Gram-negative bacteria. This chain is 3-deoxy-manno-octulosonate cytidylyltransferase, found in Agrobacterium fabrum (strain C58 / ATCC 33970) (Agrobacterium tumefaciens (strain C58)).